Reading from the N-terminus, the 311-residue chain is Probable lipid kinase YegS-like (311 aa).

One can recognise a DAGKc domain in the interval 9 to 140 (EHDGDTWLIL…VDVGTLGDDY (132 aa)). Residues T47, 73–79 (GDGTVNE), and S102 each bind ATP. Residues K221, D224, and L226 each coordinate Mg(2+). Residue E281 is the Proton acceptor of the active site.

This sequence belongs to the diacylglycerol/lipid kinase family. YegS lipid kinase subfamily. Mg(2+) serves as cofactor. It depends on Ca(2+) as a cofactor.

It localises to the cytoplasm. Probably phosphorylates lipids; the in vivo substrate is unknown. The chain is Probable lipid kinase YegS-like from Chromohalobacter salexigens (strain ATCC BAA-138 / DSM 3043 / CIP 106854 / NCIMB 13768 / 1H11).